A 449-amino-acid polypeptide reads, in one-letter code: Type 3 secretion system ATPase (449 aa).

Residue 178–183 (GCGKTT) participates in ATP binding.

This sequence belongs to the ATPase alpha/beta chains family. T3SS ATPase subfamily. As to quaternary structure, the core secretion machinery of the T3SS is composed of approximately 20 different proteins, including cytoplasmic components, a base, an export apparatus and a needle. This subunit is part of the cytosolic complex. Forms homododecamers.

The protein localises to the cytoplasm. The catalysed reaction is ATP + H2O + cellular proteinSide 1 = ADP + phosphate + cellular proteinSide 2.. ATPase component of the type III secretion system (T3SS), also called injectisome, which is used to inject bacterial effector proteins into eukaryotic host cells. Acts as a molecular motor to provide the energy that is required for the export of proteins. Required for type III secretion apparatus (T3SA) formation, proper protein secretion, host cell invasion and virulence. May play a critical role in T3SS substrate recognition, disassembly of the effector/chaperone complex and unfolding of the effector in an ATP-dependent manner prior to secretion. This Pseudomonas syringae pv. syringae protein is Type 3 secretion system ATPase.